The primary structure comprises 459 residues: Ribulose bisphosphate carboxylase large chain (459 aa).

Residues 1–2 constitute a propeptide that is removed on maturation; that stretch reads MS. Pro3 is modified (N-acetylproline). An N6,N6,N6-trimethyllysine modification is found at Lys14. Substrate is bound by residues Asn123 and Thr173. Lys175 functions as the Proton acceptor in the catalytic mechanism. Lys177 contacts substrate. Residues Lys201, Asp203, and Glu204 each contribute to the Mg(2+) site. An N6-carboxylysine modification is found at Lys201. The active-site Proton acceptor is His294. 3 residues coordinate substrate: Arg295, His327, and Ser379.

The protein belongs to the RuBisCO large chain family. Type I subfamily. As to quaternary structure, heterohexadecamer of 8 large chains and 8 small chains; disulfide-linked. The disulfide link is formed within the large subunit homodimers. Requires Mg(2+) as cofactor. Post-translationally, the disulfide bond which can form in the large chain dimeric partners within the hexadecamer appears to be associated with oxidative stress and protein turnover.

Its subcellular location is the plastid. It localises to the chloroplast. The catalysed reaction is 2 (2R)-3-phosphoglycerate + 2 H(+) = D-ribulose 1,5-bisphosphate + CO2 + H2O. It carries out the reaction D-ribulose 1,5-bisphosphate + O2 = 2-phosphoglycolate + (2R)-3-phosphoglycerate + 2 H(+). In terms of biological role, ruBisCO catalyzes two reactions: the carboxylation of D-ribulose 1,5-bisphosphate, the primary event in carbon dioxide fixation, as well as the oxidative fragmentation of the pentose substrate in the photorespiration process. Both reactions occur simultaneously and in competition at the same active site. This Streptopus lanceolatus (Rose twisted stalk) protein is Ribulose bisphosphate carboxylase large chain.